The chain runs to 303 residues: Bifunctional protein FolD 2 (303 aa).

Residues 169–171 (GRS), serine 194, and isoleucine 235 each bind NADP(+).

This sequence belongs to the tetrahydrofolate dehydrogenase/cyclohydrolase family. As to quaternary structure, homodimer.

It carries out the reaction (6R)-5,10-methylene-5,6,7,8-tetrahydrofolate + NADP(+) = (6R)-5,10-methenyltetrahydrofolate + NADPH. It catalyses the reaction (6R)-5,10-methenyltetrahydrofolate + H2O = (6R)-10-formyltetrahydrofolate + H(+). It functions in the pathway one-carbon metabolism; tetrahydrofolate interconversion. Its function is as follows. Catalyzes the oxidation of 5,10-methylenetetrahydrofolate to 5,10-methenyltetrahydrofolate and then the hydrolysis of 5,10-methenyltetrahydrofolate to 10-formyltetrahydrofolate. The protein is Bifunctional protein FolD 2 of Pseudomonas putida (strain GB-1).